Consider the following 210-residue polypeptide: ATP-dependent Clp protease proteolytic subunit (210 aa).

The active-site Nucleophile is the serine 111. Histidine 136 is a catalytic residue.

The protein belongs to the peptidase S14 family. In terms of assembly, fourteen ClpP subunits assemble into 2 heptameric rings which stack back to back to give a disk-like structure with a central cavity, resembling the structure of eukaryotic proteasomes.

The protein resides in the cytoplasm. It catalyses the reaction Hydrolysis of proteins to small peptides in the presence of ATP and magnesium. alpha-casein is the usual test substrate. In the absence of ATP, only oligopeptides shorter than five residues are hydrolyzed (such as succinyl-Leu-Tyr-|-NHMec, and Leu-Tyr-Leu-|-Tyr-Trp, in which cleavage of the -Tyr-|-Leu- and -Tyr-|-Trp bonds also occurs).. Its function is as follows. Cleaves peptides in various proteins in a process that requires ATP hydrolysis. Has a chymotrypsin-like activity. Plays a major role in the degradation of misfolded proteins. In Halorhodospira halophila (strain DSM 244 / SL1) (Ectothiorhodospira halophila (strain DSM 244 / SL1)), this protein is ATP-dependent Clp protease proteolytic subunit.